The chain runs to 294 residues: MEIRRRPPNPKVRVAHLEYAVPHDEEEPKNILEKIVWAKDREVDAARERVPLQTLKRQIEDLPPTRDFLAALREAPVQPAVIAEVKKASPSKGVIREDFDPVAIAEAYAAGGARCLSVLTDKTFFQGGFDVLVEVRQAVDLPLLCKEFVLSPYQLFQARAAGADAVLLIAAILTDQDLQYLKKAAAALGLDVLVEVHDAAELERVLNLGGFPLIGINNRDLTSFETDLSTTEQLMERFGDRLQDQGSLLVSESGLFDRSDLDRVKAAGADAVLVGEALMRQQDVQSALTNLIHG.

The protein belongs to the TrpC family.

It carries out the reaction 1-(2-carboxyphenylamino)-1-deoxy-D-ribulose 5-phosphate + H(+) = (1S,2R)-1-C-(indol-3-yl)glycerol 3-phosphate + CO2 + H2O. The protein operates within amino-acid biosynthesis; L-tryptophan biosynthesis; L-tryptophan from chorismate: step 4/5. This is Indole-3-glycerol phosphate synthase from Parasynechococcus marenigrum (strain WH8102).